The primary structure comprises 381 residues: Heme A synthase (381 aa).

Residues 1–28 (MSNRTIFEEVSSDSKQQSSPTPGGIDRK) form a disordered region. The next 8 helical transmembrane spans lie at 36-56 (IRVW…VGGL), 125-145 (VIGL…SIPT), 151-171 (LLLP…MVAS), 187-207 (LATH…YMFL), 230-250 (STGL…VAGI), 287-307 (LVQF…VVVW), 320-340 (FAFN…IVTV), and 344-364 (APVE…VLIL). Heme is bound at residue H292. H352 contributes to the heme binding site.

Belongs to the COX15/CtaA family. Type 2 subfamily. As to quaternary structure, interacts with CtaB. Heme b is required as a cofactor.

It is found in the cell membrane. The catalysed reaction is Fe(II)-heme o + 2 A + H2O = Fe(II)-heme a + 2 AH2. Its pathway is porphyrin-containing compound metabolism; heme A biosynthesis; heme A from heme O: step 1/1. Catalyzes the conversion of heme O to heme A by two successive hydroxylations of the methyl group at C8. The first hydroxylation forms heme I, the second hydroxylation results in an unstable dihydroxymethyl group, which spontaneously dehydrates, resulting in the formyl group of heme A. The sequence is that of Heme A synthase from Ruegeria sp. (strain TM1040) (Silicibacter sp.).